Reading from the N-terminus, the 287-residue chain is Kit ligand (287 aa).

The signal sequence occupies residues 1 to 25 (MKKAQTWIITCFCLQLLLLNPLVKT). Residues 26–225 (QSSCGNPVTD…LGFISSSSLQ (200 aa)) are Extracellular-facing. 2 cysteine pairs are disulfide-bonded: Cys29–Cys117 and Cys68–Cys167. Residues Asn100, Asn106, Asn149, Asn178, Asn200, and Asn206 are each glycosylated (N-linked (GlcNAc...) asparagine). A helical transmembrane segment spans residues 226–246 (GISIALTSLLSLLIGFILGVI). The Cytoplasmic segment spans residues 247–287 (YWKKTHPKSRPESNETTQCHGCQEENEISMLQQKEKEHLQV).

Belongs to the SCF family. In terms of assembly, homodimer, non-covalently linked. A soluble form is produced by proteolytic processing of isoform 1 in the extracellular domain.

It localises to the cell membrane. It is found in the secreted. The protein resides in the cytoplasm. The protein localises to the cytoskeleton. Its subcellular location is the cell projection. It localises to the lamellipodium. It is found in the filopodium. Its function is as follows. Ligand for the receptor-type protein-tyrosine kinase KIT. Plays an essential role in the regulation of cell survival and proliferation, hematopoiesis, stem cell maintenance, gametogenesis, mast cell development, migration and function, and in melanogenesis. KITLG/SCF binding can activate several signaling pathways. Acts synergistically with other cytokines, probably interleukins. This is Kit ligand (KITLG) from Coturnix japonica (Japanese quail).